The following is a 430-amino-acid chain: Glycine reductase complex component B subunits alpha and beta (430 aa).

Cys242 serves as the catalytic Schiff-base intermediate with substrate; via pyruvic acid. Cys242 is subject to Pyruvic acid (Cys).

As to quaternary structure, heterohexamer of two alpha, two beta and two gamma subunits. Component of the glycine reductase complex, together with components A and C. PB is substrate specific. In terms of processing, the peptide chain is cleaved into beta and alpha chains, and the alpha chain N-terminal cysteine is deaminated and oxidized to form a reactive pyruvoyl group.

It catalyses the reaction acetyl phosphate + [thioredoxin]-disulfide + NH4(+) + H2O = [thioredoxin]-dithiol + glycine + phosphate + H(+). In the first step of glycine reductase, the substrate is bound to component PB via a Schiff base intermediate. Then the PB-activated substrate is nucleophilically attacked by the selenol anion of component PA to transform it to a carboxymethylated selenoether and the respective amine. By action of component PC, acetyl phosphate is formed, leaving component PA in its oxidized state. Finally component PA becomes reduced by the thioredoxin system to start a new catalytic cycle of reductive deamination. This chain is Glycine reductase complex component B subunits alpha and beta (grdE), found in Acetoanaerobium sticklandii (strain ATCC 12662 / DSM 519 / JCM 1433 / CCUG 9281 / NCIMB 10654 / HF) (Clostridium sticklandii).